The primary structure comprises 449 residues: Heterogeneous nuclear ribonucleoprotein H2 (449 aa).

M1 carries the N-acetylmethionine modification. An N-acetylmethionine; in Heterogeneous nuclear ribonucleoprotein H2, N-terminally processed modification is found at M2. The RRM 1 domain maps to 11–90 (FVVKVRGLPW…RYVEVFKSNS (80 aa)). S23 is subject to Phosphoserine. A Glycyl lysine isopeptide (Lys-Gly) (interchain with G-Cter in SUMO2) cross-link involves residue K35. Phosphoserine is present on residues S54 and S63. K87 participates in a covalent cross-link: Glycyl lysine isopeptide (Lys-Gly) (interchain with G-Cter in SUMO2). Position 90 is a phosphoserine (S90). Residue K98 forms a Glycyl lysine isopeptide (Lys-Gly) (interchain with G-Cter in SUMO2) linkage. Positions 111-188 (GFVRLRGLPF…RYIEIFKSSR (78 aa)) constitute an RRM 2 domain. R233 is modified (dimethylated arginine; alternate). R233 carries the omega-N-methylarginine; alternate modification. Residues 234–249 (GAYGGGYGGYDDYGGY) form a 1-1 repeat. The interval 234–433 (GAYGGGYGGY…YGGQSSMSGY (200 aa)) is 2 X 16 AA Gly-rich approximate repeats. Phosphotyrosine is present on Y246. Positions 289–364 (HCVHMRGLPY…RYVELFLNST (76 aa)) constitute an RRM 3 domain. Residue S310 is modified to Phosphoserine. 3 repeat units span residues 354–372 (HRYVELFLNSTAGTSGGAY), 374–392 (HSYVELFLNSTAGASGGAY), and 418–433 (GGYGGGYGGQSSMSGY). The 2 X 19 AA perfect repeats stretch occupies residues 354–392 (HRYVELFLNSTAGTSGGAYDHSYVELFLNSTAGASGGAY).

In terms of assembly, component of a ribonucleoprotein complex containing mRNAs and RNA-binding proteins including DDX5, HNRNPH2 and SRSF1 as well as splicing regulator ARVCF. Interacts with TXNL4/DIM1.

The protein localises to the nucleus. It localises to the nucleoplasm. In terms of biological role, this protein is a component of the heterogeneous nuclear ribonucleoprotein (hnRNP) complexes which provide the substrate for the processing events that pre-mRNAs undergo before becoming functional, translatable mRNAs in the cytoplasm. Binds poly(RG). This chain is Heterogeneous nuclear ribonucleoprotein H2 (Hnrnph2), found in Mus musculus (Mouse).